A 714-amino-acid polypeptide reads, in one-letter code: Polyribonucleotide nucleotidyltransferase (714 aa).

The Mg(2+) site is built by Asp-487 and Asp-493. Positions 554–613 (PRIETLKIPTDKIREVIGTGGKVIREIVEKTGAKINIEDDGTVKVASSDGNSIKAAIAWI) constitute a KH domain. The S1 motif domain occupies 623–691 (GQIYEGTVVK…DRGKVRLSMR (69 aa)).

This sequence belongs to the polyribonucleotide nucleotidyltransferase family. It depends on Mg(2+) as a cofactor.

It is found in the cytoplasm. The catalysed reaction is RNA(n+1) + phosphate = RNA(n) + a ribonucleoside 5'-diphosphate. Involved in mRNA degradation. Catalyzes the phosphorolysis of single-stranded polyribonucleotides processively in the 3'- to 5'-direction. The sequence is that of Polyribonucleotide nucleotidyltransferase from Methylocella silvestris (strain DSM 15510 / CIP 108128 / LMG 27833 / NCIMB 13906 / BL2).